A 250-amino-acid chain; its full sequence is Ubiquitin-conjugating enzyme E2 6 (250 aa).

Residues 1 to 232 are Cytoplasmic-facing; it reads MATKQAHKRL…DGKEPNDSSS (232 aa). Residues 5-167 form the UBC core domain; sequence QAHKRLTKEY…VQENVETLEK (163 aa). Residue cysteine 87 is the Glycyl thioester intermediate of the active site. The residue at position 139 (serine 139) is a Phosphoserine. Threonine 178 carries the phosphothreonine modification. A disordered region spans residues 209 to 229; sequence AEQALRQSENNSKKDGKEPND. The segment covering 219–228 has biased composition (basic and acidic residues); the sequence is NSKKDGKEPN. A helical membrane pass occupies residues 233–249; the sequence is MVYIGIAIFLFLVGLFM.

It belongs to the ubiquitin-conjugating enzyme family.

The protein localises to the endoplasmic reticulum membrane. It catalyses the reaction S-ubiquitinyl-[E1 ubiquitin-activating enzyme]-L-cysteine + [E2 ubiquitin-conjugating enzyme]-L-cysteine = [E1 ubiquitin-activating enzyme]-L-cysteine + S-ubiquitinyl-[E2 ubiquitin-conjugating enzyme]-L-cysteine.. Its pathway is protein modification; protein ubiquitination. Catalyzes the covalent attachment of ubiquitin to other proteins. Functions in degradation of misfolded or regulated proteins localized in the endoplasmic reticulum (ER) lumen or membrane via the ubiquitin-proteasome system. Cognate E2 conjugating enzyme for the DOA10 ubiquitin ligase complex, which is part of the ERAD-C pathway responsible for the rapid degradation of membrane proteins with misfolded cytoplasmic domains. The protein is Ubiquitin-conjugating enzyme E2 6 (UBC6) of Saccharomyces cerevisiae (strain ATCC 204508 / S288c) (Baker's yeast).